A 752-amino-acid polypeptide reads, in one-letter code: BCLAF1 and THRAP3 family member 3 (752 aa).

The span at 1-13 (MARSRSRSPRWKQ) shows a compositional bias: basic residues. 3 disordered regions span residues 1-114 (MARS…YMPT), 132-177 (PTVQ…QMSL), and 190-252 (DELR…DPAR). Residues Ser-15 and Ser-17 each carry the phosphoserine modification. Positions 23–57 (FEYHEERHFHGHYDPEYRHDQQRPFTWRMDDEKHG) are enriched in basic and acidic residues. Phosphoserine occurs at positions 78 and 80. Residues 85–109 (PVEKFDTYKPHQEYFPGRGDDDRRS) are compositionally biased toward basic and acidic residues. Over residues 190 to 199 (DELRHQRVQE) the composition is skewed to basic and acidic residues. Residue Ser-205 is modified to Phosphoserine. Composition is skewed to basic and acidic residues over residues 222 to 231 (RYPEDHDFRK) and 238 to 252 (RPTD…DPAR). A Glycyl lysine isopeptide (Lys-Gly) (interchain with G-Cter in SUMO2) cross-link involves residue Lys-416. Ser-592 is subject to Phosphoserine.

This sequence belongs to the BCLAF1/THRAP3 family.

Its subcellular location is the mitochondrion. The polypeptide is BCLAF1 and THRAP3 family member 3 (Mus musculus (Mouse)).